The chain runs to 729 residues: Alpha-galactosidase AgaA (729 aa).

Substrate contacts are provided by residues Asp-53, Trp-199, 366 to 367, Arg-443, 476 to 480, Cys-526, and Asp-548; these read DD and KWDMN. The active-site Nucleophile is Asp-478. Residue Asp-548 is the Proton donor of the active site.

This sequence belongs to the glycosyl hydrolase 36 family. In terms of assembly, homotetramer.

The catalysed reaction is Hydrolysis of terminal, non-reducing alpha-D-galactose residues in alpha-D-galactosides, including galactose oligosaccharides, galactomannans and galactolipids.. Not inhibited by D-galactose or sucrose. Inhibited by pharmaceutical drug 1-deoxygalactonojirimycin. Its function is as follows. Hydrolyzes the short-chain alpha-galactosaccharides raffinose and stachyose. This chain is Alpha-galactosidase AgaA, found in Geobacillus stearothermophilus (Bacillus stearothermophilus).